A 72-amino-acid polypeptide reads, in one-letter code: Translation initiation factor IF-1 (72 aa).

An S1-like domain is found at 1–72 (MSKNDVIEVE…TRGRIVYRFK (72 aa)).

This sequence belongs to the IF-1 family. Component of the 30S ribosomal translation pre-initiation complex which assembles on the 30S ribosome in the order IF-2 and IF-3, IF-1 and N-formylmethionyl-tRNA(fMet); mRNA recruitment can occur at any time during PIC assembly.

The protein localises to the cytoplasm. In terms of biological role, one of the essential components for the initiation of protein synthesis. Stabilizes the binding of IF-2 and IF-3 on the 30S subunit to which N-formylmethionyl-tRNA(fMet) subsequently binds. Helps modulate mRNA selection, yielding the 30S pre-initiation complex (PIC). Upon addition of the 50S ribosomal subunit IF-1, IF-2 and IF-3 are released leaving the mature 70S translation initiation complex. This Desulforamulus reducens (strain ATCC BAA-1160 / DSM 100696 / MI-1) (Desulfotomaculum reducens) protein is Translation initiation factor IF-1.